Reading from the N-terminus, the 277-residue chain is Bifunctional protein FolD (277 aa).

NADP(+) contacts are provided by residues 164 to 166 (GRS), S189, and T230.

This sequence belongs to the tetrahydrofolate dehydrogenase/cyclohydrolase family. Homodimer.

It carries out the reaction (6R)-5,10-methylene-5,6,7,8-tetrahydrofolate + NADP(+) = (6R)-5,10-methenyltetrahydrofolate + NADPH. The catalysed reaction is (6R)-5,10-methenyltetrahydrofolate + H2O = (6R)-10-formyltetrahydrofolate + H(+). The protein operates within one-carbon metabolism; tetrahydrofolate interconversion. Functionally, catalyzes the oxidation of 5,10-methylenetetrahydrofolate to 5,10-methenyltetrahydrofolate and then the hydrolysis of 5,10-methenyltetrahydrofolate to 10-formyltetrahydrofolate. This Clostridium perfringens (strain SM101 / Type A) protein is Bifunctional protein FolD.